We begin with the raw amino-acid sequence, 1073 residues long: ATP-dependent helicase/deoxyribonuclease subunit B (1073 aa).

It belongs to the helicase family. AddB/RexB type 2 subfamily. In terms of assembly, heterodimer of AddA and RexB. Mg(2+) serves as cofactor.

The heterodimer acts as both an ATP-dependent DNA helicase and an ATP-dependent, dual-direction single-stranded exonuclease. Recognizes the chi site generating a DNA molecule suitable for the initiation of homologous recombination. This subunit has 5' -&gt; 3' nuclease activity but not helicase activity. The chain is ATP-dependent helicase/deoxyribonuclease subunit B from Streptococcus equi subsp. zooepidemicus (strain MGCS10565).